The sequence spans 406 residues: E3 ubiquitin-protein ligase RING1 (406 aa).

The residue at position 24 (threonine 24) is a Phosphothreonine. The necessary for transcriptional repression stretch occupies residues 30-234; it reads MDGTEIAVSP…GGAGSEDSGD (205 aa). Serine 38 bears the Phosphoserine mark. Residues 48-88 form an RING-type zinc finger; sequence CPICLDMLKNTMTTKECLHRFCSDCIVTALRSGNKECPTCR. A phosphoserine mark is found at serine 140, serine 187, and serine 190. 2 disordered regions span residues 148-263 and 309-354; these read QAMH…GEIE and QQQE…PSLE. Acidic residues predominate over residues 175–187; that stretch reads EPGEGEGDGEDVS. A Nuclear localization signal motif is present at residues 201-204; it reads KRPR. The segment covering 205 to 228 has biased composition (gly residues); the sequence is GGGAGGSSVGTGGGGTGGVGGGAG. Residues threonine 215 and threonine 220 each carry the phosphothreonine modification. 2 positions are modified to phosphoserine: serine 229 and serine 232. Residues 230–406 form a necessary for interaction with CBX2 region; the sequence is EDSGDRGGTL…LCYAPTKDPK (177 aa). Over residues 235-244 the composition is skewed to gly residues; it reads RGGTLGGGTL. Residues 246 to 258 are compositionally biased toward pro residues; that stretch reads PPSPPGAPSPPEP. Serine 248 and serine 254 each carry phosphoserine. Gly residues predominate over residues 315 to 343; that stretch reads EPGGPGGGASDTGGPDGCGGEGGGAGGGD.

As to quaternary structure, component of chromatin-associated Polycomb (PcG) complexes. Interacts with BMI1. Part of the E2F6.com-1 complex in G0 phase composed of E2F6, MGA, MAX, TFDP1, CBX3, BAT8, EUHMTASE1, RING1, RNF2/RING2 MBLR, L3MBTL2 and YAF2. Interacts with CBX2 and PCGF6. Component of a PRC1-like complex. Component of repressive BCOR complex containing Polycomb group subcomplex at least composed of RYBP, PCGF1, BCOR and RNF2/RING2. Interacts with PCGF2, RNF2; CBX6, CBX7 and CBX8. Interacts with PHC2. Interacts with MN1. Interacts with USP26.

The protein resides in the nucleus. It is found in the nucleus speckle. It catalyses the reaction S-ubiquitinyl-[E2 ubiquitin-conjugating enzyme]-L-cysteine + [acceptor protein]-L-lysine = [E2 ubiquitin-conjugating enzyme]-L-cysteine + N(6)-ubiquitinyl-[acceptor protein]-L-lysine.. It participates in protein modification; protein ubiquitination. Constitutes one of the E3 ubiquitin-protein ligases that mediate monoubiquitination of 'Lys-119' of histone H2A, thereby playing a central role in histone code and gene regulation. H2A 'Lys-119' ubiquitination gives a specific tag for epigenetic transcriptional repression and participates in X chromosome inactivation of female mammals. Essential component of a Polycomb group (PcG) multiprotein PRC1-like complex, a complex class required to maintain the transcriptionally repressive state of many genes, including Hox genes, throughout development. PcG PRC1 complex acts via chromatin remodeling and modification of histones, rendering chromatin heritably changed in its expressibility. Compared to RNF2/RING2, it does not have the main E3 ubiquitin ligase activity on histone H2A, and it may rather act as a modulator of RNF2/RING2 activity. The polypeptide is E3 ubiquitin-protein ligase RING1 (Homo sapiens (Human)).